A 236-amino-acid chain; its full sequence is 2-C-methyl-D-erythritol 4-phosphate cytidylyltransferase (236 aa).

This sequence belongs to the IspD/TarI cytidylyltransferase family. IspD subfamily. Homodimer.

It catalyses the reaction 2-C-methyl-D-erythritol 4-phosphate + CTP + H(+) = 4-CDP-2-C-methyl-D-erythritol + diphosphate. It participates in isoprenoid biosynthesis; isopentenyl diphosphate biosynthesis via DXP pathway; isopentenyl diphosphate from 1-deoxy-D-xylulose 5-phosphate: step 2/6. In terms of biological role, catalyzes the formation of 4-diphosphocytidyl-2-C-methyl-D-erythritol from CTP and 2-C-methyl-D-erythritol 4-phosphate (MEP). In Salmonella paratyphi B (strain ATCC BAA-1250 / SPB7), this protein is 2-C-methyl-D-erythritol 4-phosphate cytidylyltransferase.